Reading from the N-terminus, the 203-residue chain is Ras-related protein Rab-18 (203 aa).

GTP is bound by residues Ser20, Gly23, Lys24, Ser25, Ser26, Asp37, Pro38, Thr43, Gly69, Lys126, Asp128, and Ala155. Residues 40–48 carry the Effector region motif; that stretch reads QAATIGVDF. 2 S-geranylgeranyl cysteine lipidation sites follow: Cys201 and Cys203. Position 203 is a cysteine methyl ester (Cys203).

This sequence belongs to the small GTPase superfamily. Rab family.

It catalyses the reaction GTP + H2O = GDP + phosphate + H(+). The small GTPases Rab are key regulators of intracellular membrane trafficking, from the formation of transport vesicles to their fusion with membranes. Rabs cycle between an inactive GDP-bound form and an active GTP-bound form that is able to recruit to membranes different sets of downstream effectors directly responsible for vesicle formation, movement, tethering and fusion. Plays a role in apical endocytosis/recycling. May be implicated in transport between the plasma membrane and early endosomes. Plays a role in the shedding of pathogen spores from intestinal cells. The sequence is that of Ras-related protein Rab-18 (rab-18) from Caenorhabditis elegans.